We begin with the raw amino-acid sequence, 379 residues long: Homoserine O-acetyltransferase (379 aa).

In terms of domain architecture, AB hydrolase-1 spans Asn-52–Glu-356. Ser-157 functions as the Nucleophile in the catalytic mechanism. Arg-227 is a binding site for substrate. Active-site residues include Asp-320 and His-350. Asp-351 serves as a coordination point for substrate.

This sequence belongs to the AB hydrolase superfamily. MetX family. In terms of assembly, homodimer.

Its subcellular location is the cytoplasm. It catalyses the reaction L-homoserine + acetyl-CoA = O-acetyl-L-homoserine + CoA. Its pathway is amino-acid biosynthesis; L-methionine biosynthesis via de novo pathway; O-acetyl-L-homoserine from L-homoserine: step 1/1. In terms of biological role, transfers an acetyl group from acetyl-CoA to L-homoserine, forming acetyl-L-homoserine. The sequence is that of Homoserine O-acetyltransferase from Mycobacterium bovis (strain ATCC BAA-935 / AF2122/97).